A 148-amino-acid polypeptide reads, in one-letter code: MRVFTPSHKVQSNPLWRTVGFPSSSGPHLNAILNEGLPVTIVDKIQNWSTFGKGDILRIAGIQIRSYSRRCSGKGKFTADESQRIARFVRVMDHAVDLFNGDKDKAAQWMKRPIRGLGYVTPESMLDTESGALDVMNLIGRIEHGIVS.

The protein belongs to the MbcA/ParS/Xre antitoxin family. In terms of assembly, homodimer. Forms a complex with cognate toxin Rse.

In terms of biological role, antitoxin component of a type II toxin-antitoxin (TA) system. Neutralizes the NAD(+) depleting activity of cognate toxin Res. This Photorhabdus laumondii subsp. laumondii (strain DSM 15139 / CIP 105565 / TT01) (Photorhabdus luminescens subsp. laumondii) protein is Antitoxin Xre.